The primary structure comprises 130 residues: Small ribosomal subunit protein uS9 (130 aa).

It belongs to the universal ribosomal protein uS9 family.

The polypeptide is Small ribosomal subunit protein uS9 (Stenotrophomonas maltophilia (strain R551-3)).